Consider the following 597-residue polypeptide: Scarecrow-like protein 5 (597 aa).

The segment at 111 to 172 is disordered; the sequence is ESSSGTKSHP…SPLSGSSATN (62 aa). Positions 123-169 are enriched in low complexity; sequence NNKNNSSSTTSFSSNESPISQANNNNLSRFNNHSPEENNNSPLSGSS. A GRAS domain is found at 218–597; the sequence is SMEMISRGDL…QPLITSCAWR (380 aa). A leucine repeat I (LRI) region spans residues 225 to 285; that stretch reads GDLKGVLYEC…VARLASSGSS (61 aa). The interval 304-369 is VHIID; sequence MHILYEACPY…GGPPNVRITG (66 aa). The VHIID motif lies at 335–339; the sequence is VHIID. The leucine repeat II (LRII) stretch occupies residues 385–417; sequence LVGQRLGKLAEMCGVPFEFHGAALCCTEVEIEK. The interval 426–520 is PFYRE; that stretch reads LAVNFPLVLH…QHCLAREVVN (95 aa). The interval 523–597 is SAW; that stretch reads ACEGVEREER…QPLITSCAWR (75 aa).

Belongs to the GRAS family. Expressed in seedlings, roots, shoots, leaves, flowers and siliques.

The protein localises to the nucleus. Probable transcription factor involved in plant development. The protein is Scarecrow-like protein 5 (SCL5) of Arabidopsis thaliana (Mouse-ear cress).